The primary structure comprises 524 residues: Cytochrome P450 1A1 (524 aa).

The segment at 33–44 is mitochondrial targeting signal; the sequence is LRTQVPKGLKTP. An O-linked (GlcNAc) serine glycan is attached at serine 71. Substrate is bound at residue phenylalanine 228. Cysteine 461 contributes to the heme binding site.

The protein belongs to the cytochrome P450 family. As to quaternary structure, interacts with cytosolic chaperones HSP70 and HSP90; this interaction is required for initial targeting to mitochondria. Interacts (via mitochondrial targeting signal) with TOMM40 (via N-terminus); this interaction is required for translocation across the mitochondrial outer membrane. Heme serves as cofactor.

It is found in the endoplasmic reticulum membrane. It localises to the mitochondrion inner membrane. Its subcellular location is the microsome membrane. The protein resides in the cytoplasm. The catalysed reaction is an organic molecule + reduced [NADPH--hemoprotein reductase] + O2 = an alcohol + oxidized [NADPH--hemoprotein reductase] + H2O + H(+). It carries out the reaction estrone + reduced [NADPH--hemoprotein reductase] + O2 = 2-hydroxyestrone + oxidized [NADPH--hemoprotein reductase] + H2O + H(+). It catalyses the reaction estrone + reduced [NADPH--hemoprotein reductase] + O2 = 4-hydroxyestrone + oxidized [NADPH--hemoprotein reductase] + H2O + H(+). The enzyme catalyses estrone + reduced [NADPH--hemoprotein reductase] + O2 = 6alpha-hydroxyestrone + oxidized [NADPH--hemoprotein reductase] + H2O + H(+). The catalysed reaction is estrone + reduced [NADPH--hemoprotein reductase] + O2 = 15alpha-hydroxyestrone + oxidized [NADPH--hemoprotein reductase] + H2O + H(+). It carries out the reaction estrone + reduced [NADPH--hemoprotein reductase] + O2 = 16alpha-hydroxyestrone + oxidized [NADPH--hemoprotein reductase] + H2O + H(+). It catalyses the reaction 17beta-estradiol + reduced [NADPH--hemoprotein reductase] + O2 = 2-hydroxy-17beta-estradiol + oxidized [NADPH--hemoprotein reductase] + H2O + H(+). The enzyme catalyses 17beta-estradiol + reduced [NADPH--hemoprotein reductase] + O2 = 4-hydroxy-17beta-estradiol + oxidized [NADPH--hemoprotein reductase] + H2O + H(+). The catalysed reaction is 17beta-estradiol + reduced [NADPH--hemoprotein reductase] + O2 = 6alpha-hydroxy-17beta-estradiol + oxidized [NADPH--hemoprotein reductase] + H2O + H(+). It carries out the reaction 17beta-estradiol + reduced [NADPH--hemoprotein reductase] + O2 = 7alpha-hydroxy-17beta-estradiol + oxidized [NADPH--hemoprotein reductase] + H2O + H(+). It catalyses the reaction 17beta-estradiol + reduced [NADPH--hemoprotein reductase] + O2 = 15alpha-hydroxy-17beta-estradiol + oxidized [NADPH--hemoprotein reductase] + H2O + H(+). The enzyme catalyses (5Z,8Z,11Z)-eicosatrienoate + reduced [NADPH--hemoprotein reductase] + O2 = 19-hydroxy-(5Z,8Z,11Z)-eicosatrienoate + oxidized [NADPH--hemoprotein reductase] + H2O + H(+). The catalysed reaction is (5Z,8Z,11Z,14Z)-eicosatetraenoate + reduced [NADPH--hemoprotein reductase] + O2 = 16-hydroxy-(5Z,8Z,11Z,14Z)-eicosatetraenoate + oxidized [NADPH--hemoprotein reductase] + H2O + H(+). It carries out the reaction (5Z,8Z,11Z,14Z)-eicosatetraenoate + reduced [NADPH--hemoprotein reductase] + O2 = 17-hydroxy-(5Z,8Z,11Z,14Z)-eicosatetraenoate + oxidized [NADPH--hemoprotein reductase] + H2O + H(+). It catalyses the reaction (5Z,8Z,11Z,14Z)-eicosatetraenoate + reduced [NADPH--hemoprotein reductase] + O2 = 18-hydroxy-(5Z,8Z,11Z,14Z)-eicosatetraenoate + oxidized [NADPH--hemoprotein reductase] + H2O + H(+). The enzyme catalyses (5Z,8Z,11Z,14Z)-eicosatetraenoate + reduced [NADPH--hemoprotein reductase] + O2 = 19-hydroxy-(5Z,8Z,11Z,14Z)-eicosatetraenoate + oxidized [NADPH--hemoprotein reductase] + H2O + H(+). The catalysed reaction is (5Z,8Z,11Z,14Z,17Z)-eicosapentaenoate + reduced [NADPH--hemoprotein reductase] + O2 = 19-hydroxy-(5Z,8Z,11Z,14Z,17Z)-eicosapentaenoate + oxidized [NADPH--hemoprotein reductase] + H2O + H(+). It carries out the reaction (5Z,8Z,11Z,14Z)-eicosatetraenoate + reduced [NADPH--hemoprotein reductase] + O2 = (8R,9S)-epoxy-(5Z,11Z,14Z)-eicosatrienoate + oxidized [NADPH--hemoprotein reductase] + H2O + H(+). It catalyses the reaction (5Z,8Z,11Z,14Z)-eicosatetraenoate + reduced [NADPH--hemoprotein reductase] + O2 = (11R,12S)-epoxy-(5Z,8Z,14Z)-eicosatrienoate + oxidized [NADPH--hemoprotein reductase] + H2O + H(+). The enzyme catalyses (5Z,8Z,11Z,14Z)-eicosatetraenoate + reduced [NADPH--hemoprotein reductase] + O2 = (14S,15R)-epoxy-(5Z,8Z,11Z)-eicosatrienoate + oxidized [NADPH--hemoprotein reductase] + H2O + H(+). The catalysed reaction is (5Z,8Z,11Z,14Z)-eicosatetraenoate + reduced [NADPH--hemoprotein reductase] + O2 = (14R,15S)-epoxy-(5Z,8Z,11Z)-eicosatrienoate + oxidized [NADPH--hemoprotein reductase] + H2O + H(+). It carries out the reaction (5Z,8Z,11Z,14Z,17Z)-eicosapentaenoate + reduced [NADPH--hemoprotein reductase] + O2 = (17R,18S)-epoxy-(5Z,8Z,11Z,14Z)-eicosatetraenoate + oxidized [NADPH--hemoprotein reductase] + H2O + H(+). It catalyses the reaction (4Z,7Z,10Z,13Z,16Z,19Z)-docosahexaenoate + reduced [NADPH--hemoprotein reductase] + O2 = (19S,20R)-epoxy-(4Z,7Z,10Z,13Z,16Z)-docosapentaenoate + oxidized [NADPH--hemoprotein reductase] + H2O + H(+). The enzyme catalyses (4Z,7Z,10Z,13Z,16Z,19Z)-docosahexaenoate + reduced [NADPH--hemoprotein reductase] + O2 = (19R,20S)-epoxy-(4Z,7Z,10Z,13Z,16Z)-docosapentaenoate + oxidized [NADPH--hemoprotein reductase] + H2O + H(+). The catalysed reaction is all-trans-retinol + reduced [NADPH--hemoprotein reductase] + O2 = all-trans-retinal + oxidized [NADPH--hemoprotein reductase] + 2 H2O + H(+). It carries out the reaction all-trans-retinal + reduced [NADPH--hemoprotein reductase] + O2 = all-trans-retinoate + oxidized [NADPH--hemoprotein reductase] + H2O + 2 H(+). It catalyses the reaction (13S)-hydroperoxy-(9Z,11E)-octadecadienoate = 13-oxo-(9Z,11E)-octadecadienoate + H2O. The enzyme catalyses (12S)-hydroperoxy-(5Z,8Z,10E,14Z)-eicosatetraenoate = 12-oxo-(5Z,8Z,10E,14Z)-eicosatetraenoate + H2O. The catalysed reaction is (15S)-hydroperoxy-(5Z,8Z,11Z,13E)-eicosatetraenoate = 15-oxo-(5Z,8Z,11Z,13E)-eicosatetraenoate + H2O. It carries out the reaction (5S)-hydroperoxy-(6E,8Z,11Z,14Z)-eicosatetraenoate = 5-oxo-(6E,8Z,11Z,14Z)-eicosatetraenoate + H2O. It functions in the pathway steroid hormone biosynthesis. It participates in lipid metabolism; fatty acid metabolism. The protein operates within cofactor metabolism; retinol metabolism. Its function is as follows. A cytochrome P450 monooxygenase involved in the metabolism of various endogenous substrates, including fatty acids, steroid hormones and vitamins. Mechanistically, uses molecular oxygen inserting one oxygen atom into a substrate, and reducing the second into a water molecule, with two electrons provided by NADPH via cytochrome P450 reductase (CPR; NADPH-ferrihemoprotein reductase). Catalyzes the hydroxylation of carbon-hydrogen bonds. Exhibits high catalytic activity for the formation of hydroxyestrogens from estrone (E1) and 17beta-estradiol (E2), namely 2-hydroxy E1 and E2, as well as D-ring hydroxylated E1 and E2 at the C15alpha and C16alpha positions. Displays different regioselectivities for polyunsaturated fatty acids (PUFA) hydroxylation. Catalyzes the epoxidation of double bonds of certain PUFA. Converts arachidonic acid toward epoxyeicosatrienoic acid (EET) regioisomers, 8,9-, 11,12-, and 14,15-EET, that function as lipid mediators in the vascular system. Displays an absolute stereoselectivity in the epoxidation of eicosapentaenoic acid (EPA) producing the 17(R),18(S) enantiomer. May play an important role in all-trans retinoic acid biosynthesis in extrahepatic tissues. Catalyzes two successive oxidative transformation of all-trans retinol to all-trans retinal and then to the active form all-trans retinoic acid. May also participate in eicosanoids metabolism by converting hydroperoxide species into oxo metabolites (lipoxygenase-like reaction, NADPH-independent). The polypeptide is Cytochrome P450 1A1 (CYP1A1) (Mesocricetus auratus (Golden hamster)).